The sequence spans 45 residues: U1-ctenitoxin-Pk1a (45 aa).

Intrachain disulfides connect Cys-3-Cys-16, Cys-10-Cys-25, Cys-15-Cys-34, and Cys-27-Cys-32.

In terms of tissue distribution, expressed by the venom gland.

Its subcellular location is the secreted. Its function is as follows. Neurotoxin. Causes rapid general flaccid paralysis and death in mice at dose levels of 5 ug per mouse. In Phoneutria keyserlingi (Brazilian wandering spider), this protein is U1-ctenitoxin-Pk1a.